Reading from the N-terminus, the 395-residue chain is Na(+)/H(+) antiporter NhaA (395 aa).

Helical transmembrane passes span 11–31, 61–81, 96–116, 127–147, 156–176, 179–199, 202–222, 264–284, 295–315, 331–351, and 366–386; these read FAMEAASGLLLIAAAILALII, LLLWINDGLMALFFLLIGLEV, IVLPGAAAIGGMLVPALIYWF, GWAIPTATDIAFALGVLALLG, LFLMTLAIIDDLGAIVIIAIF, GTLSTLSLMLAGACIAALVAM, MGVVKLGPYMIIGLILWVCVL, FGILPLFAFANAGLSLSGVTL, IAVGLLLGKTIGVFGLTWMAV, VLGVAILCGIGFTMSLFVGSL, and MGILTGSLFAALIGYAVTAAA.

It belongs to the NhaA Na(+)/H(+) (TC 2.A.33) antiporter family.

Its subcellular location is the cell inner membrane. It carries out the reaction Na(+)(in) + 2 H(+)(out) = Na(+)(out) + 2 H(+)(in). Na(+)/H(+) antiporter that extrudes sodium in exchange for external protons. The chain is Na(+)/H(+) antiporter NhaA from Pseudomonas fluorescens (strain ATCC BAA-477 / NRRL B-23932 / Pf-5).